The primary structure comprises 432 residues: Enolase (432 aa).

Position 168 (Gln168) interacts with (2R)-2-phosphoglycerate. The active-site Proton donor is Glu210. The Mg(2+) site is built by Asp247, Glu288, and Asp315. The (2R)-2-phosphoglycerate site is built by Lys340, Arg369, Ser370, and Lys391. Catalysis depends on Lys340, which acts as the Proton acceptor.

This sequence belongs to the enolase family. The cofactor is Mg(2+).

It localises to the cytoplasm. Its subcellular location is the secreted. The protein resides in the cell surface. It carries out the reaction (2R)-2-phosphoglycerate = phosphoenolpyruvate + H2O. It participates in carbohydrate degradation; glycolysis; pyruvate from D-glyceraldehyde 3-phosphate: step 4/5. Its function is as follows. Catalyzes the reversible conversion of 2-phosphoglycerate (2-PG) into phosphoenolpyruvate (PEP). It is essential for the degradation of carbohydrates via glycolysis. The polypeptide is Enolase (Microcystis aeruginosa (strain NIES-843 / IAM M-2473)).